Reading from the N-terminus, the 372-residue chain is Putative glutamate--cysteine ligase 2 (372 aa).

This sequence belongs to the glutamate--cysteine ligase type 2 family. YbdK subfamily. In terms of assembly, homodimer.

The catalysed reaction is L-cysteine + L-glutamate + ATP = gamma-L-glutamyl-L-cysteine + ADP + phosphate + H(+). Functionally, ATP-dependent carboxylate-amine ligase which exhibits weak glutamate--cysteine ligase activity. This Escherichia coli O127:H6 (strain E2348/69 / EPEC) protein is Putative glutamate--cysteine ligase 2 (ybdK).